The sequence spans 843 residues: Axin-2 (843 aa).

Residues 1–75 form a disordered region; that stretch reads MSSAMLVTCL…EGRASPDSPL (75 aa). A Tankyrase-binding motif motif is present at residues 21–30; it reads APRPPVPGEE. The segment covering 56 to 69 has biased composition (basic and acidic residues); it reads RRNEDGLGEPEGRA. The region spanning 81–200 is the RGS domain; it reads SLHSLLGDQD…LTSDIYLEYV (120 aa). An interaction with GSK3B region spans residues 327 to 413; the sequence is VGSKKQLQRE…REGSELTLNS (87 aa). The tract at residues 334-393 is interaction with SIAH1 and SIAH2; that stretch reads QREMHRSVKANGQVSLPHFPRTHRLPKEMTPVEPATFAAELISRLEKLKLELESRHSLEE. Disordered regions lie at residues 396–435, 447–494, 561–674, and 718–748; these read QQIR…EEDP, LKTP…AASP, APET…RTTP, and ASQQ…EDHK. The segment at 413–476 is interaction with beta-catenin; sequence SREGAPTQHP…PDHHHHHHSQ (64 aa). Composition is skewed to low complexity over residues 477-494 and 588-597; these read YHSL…AASP and PGLALPAREG. Over residues 727 to 741 the composition is skewed to polar residues; it reads SATVQTGATPFSNPS. The 83-residue stretch at 761 to 843 folds into the DIX domain; it reads ASELVVTYFF…RILGKVERID (83 aa).

As to quaternary structure, interacts with glycogen synthase kinase-3 beta (GSK3B) and beta-catenin. The interaction between axin and beta-catenin occurs via the armadillo repeats contained in beta-catenin. Interacts with SMAD7 and RNF111. Interacts with ANKRD6. Interacts with SIAH1. Interacts with SIAH2. Probably phosphorylated by GSK3B and dephosphorylated by PP2A. Post-translationally, ADP-ribosylated by tankyrase TNKS and TNKS2. Poly-ADP-ribosylated protein is recognized by RNF146, followed by ubiquitination and subsequent activation of the Wnt signaling pathway. In terms of processing, ubiquitinated by RNF146 when poly-ADP-ribosylated, leading to its degradation and subsequent activation of the Wnt signaling pathway. Deubiquitinated by USP34, deubiquitinated downstream of beta-catenin stabilization step: deubiquitination is important Wnt signaling to positively regulate beta-catenin (CTNBB1)-mediated transcription. Expressed in brain and lymphoblast.

It localises to the cytoplasm. In terms of biological role, inhibitor of the Wnt signaling pathway. Down-regulates beta-catenin. Probably facilitate the phosphorylation of beta-catenin and APC by GSK3B. In Homo sapiens (Human), this protein is Axin-2 (AXIN2).